The chain runs to 159 residues: uncharacterized protein (159 aa).

3 consecutive transmembrane segments (helical) span residues 10–30 (FLSM…SLFF), 52–72 (MLIL…VILL), and 96–116 (LTLI…PFVT).

Its subcellular location is the membrane. This is an uncharacterized protein from Escherichia coli (strain K12).